A 600-amino-acid polypeptide reads, in one-letter code: MSMRTEYCGLVTEHLLGQTVSLCGWVQRRRDHGGVIFIDLRDREGLVQVVCDPDRGEMFATAEGVRNEFCVQIKGLVRNRPEGTVNAGLKSGKIEVLCHELIVLNASVTPPFQLDDDNLSETTRLTHRVLDLRRPQMQHNLRLRYRVAIEARKYLDEQGFIDIETPMLTKSTPEGARDYLVPSRVNAGQFFALPQSPQLFKQLLMVANFDRYYQITKCFRDEDLRADRQPEFTQIDCETSFLGEQEIRDLFEDMIRHIFKTTIDVELDAKFPVMPYSEAMARFGSDKPDLRVKLEFTELTDAMKDVDFKVFSTPANAKDGRVAALRVPKGGELSRGDIDGYTEFVRIYGAKGLAWIKVNEKAKGRDGLQSPIVKNLHDASIAAILERTGAEDGDIIFFAADRAKVVNDSLGALRLKIGHSEFGKANGLVEAGWKPLWVVDFPMFEYDDEDARYVAAHHPFTSPKDEHLEYLETDPGRCLAKAYDMVLNGWEIGGGSVRIHREEVQSKVFRALKIGAEEAQAKFGFLLDALQYGAPPHGGIAFGLDRIVTMMAGADSIRDVIAFPKTQRAQDLLTQAPSPVDERQLRELHIRLRQPEQPKA.

Glu174 contributes to the L-aspartate binding site. Residues 198–201 (QLFK) form an aspartate region. Arg220 is a binding site for L-aspartate. ATP is bound by residues 220 to 222 (RDE) and Gln229. His457 lines the L-aspartate pocket. Glu491 serves as a coordination point for ATP. Arg498 contacts L-aspartate. 543–546 (GLDR) is a binding site for ATP.

Belongs to the class-II aminoacyl-tRNA synthetase family. Type 1 subfamily. As to quaternary structure, homodimer.

It is found in the cytoplasm. It catalyses the reaction tRNA(Asx) + L-aspartate + ATP = L-aspartyl-tRNA(Asx) + AMP + diphosphate. In terms of biological role, aspartyl-tRNA synthetase with relaxed tRNA specificity since it is able to aspartylate not only its cognate tRNA(Asp) but also tRNA(Asn). Reaction proceeds in two steps: L-aspartate is first activated by ATP to form Asp-AMP and then transferred to the acceptor end of tRNA(Asp/Asn). The protein is Aspartate--tRNA(Asp/Asn) ligase of Burkholderia vietnamiensis (strain G4 / LMG 22486) (Burkholderia cepacia (strain R1808)).